The chain runs to 383 residues: Thioredoxin reductase 2 (383 aa).

FAD contacts are provided by residues 66 to 69, 87 to 88, 95 to 100, Asn109, Val142, Cys200, Asp345, and 352 to 354; these read SGPA, FE, IAPGGQ, and RQA. Cys197 and Cys200 are disulfide-bonded.

The protein belongs to the class-II pyridine nucleotide-disulfide oxidoreductase family. In terms of assembly, homodimer. Requires FAD as cofactor.

It is found in the cytoplasm. The protein localises to the mitochondrion matrix. It carries out the reaction [thioredoxin]-dithiol + NADP(+) = [thioredoxin]-disulfide + NADPH + H(+). Possesses thioredoxin-disulfide reductase activity towards thioredoxins O1, O2 and F3. The polypeptide is Thioredoxin reductase 2 (NTR2) (Arabidopsis thaliana (Mouse-ear cress)).